The chain runs to 495 residues: Glutamyl-tRNA(Gln) amidotransferase subunit A (495 aa).

Catalysis depends on charge relay system residues K75 and S150. S174 acts as the Acyl-ester intermediate in catalysis.

It belongs to the amidase family. GatA subfamily. As to quaternary structure, heterotrimer of A, B and C subunits.

It catalyses the reaction L-glutamyl-tRNA(Gln) + L-glutamine + ATP + H2O = L-glutaminyl-tRNA(Gln) + L-glutamate + ADP + phosphate + H(+). Allows the formation of correctly charged Gln-tRNA(Gln) through the transamidation of misacylated Glu-tRNA(Gln) in organisms which lack glutaminyl-tRNA synthetase. The reaction takes place in the presence of glutamine and ATP through an activated gamma-phospho-Glu-tRNA(Gln). This Paraburkholderia phytofirmans (strain DSM 17436 / LMG 22146 / PsJN) (Burkholderia phytofirmans) protein is Glutamyl-tRNA(Gln) amidotransferase subunit A.